Here is a 462-residue protein sequence, read N- to C-terminus: Siroheme synthase (462 aa).

Residues 1–203 (MEYLPLFANL…GKWEHAEKEI (203 aa)) form a precorrin-2 dehydrogenase /sirohydrochlorin ferrochelatase region. NAD(+) is bound by residues 22–23 (NV) and 43–44 (DD). Residue Ser-128 is modified to Phosphoserine. Residues 215-462 (GNVALVGAGP…NWFGKIIKEQ (248 aa)) are uroporphyrinogen-III C-methyltransferase. Position 224 (Pro-224) interacts with S-adenosyl-L-methionine. The active-site Proton acceptor is Asp-247. Catalysis depends on Lys-269, which acts as the Proton donor. S-adenosyl-L-methionine is bound by residues 300–302 (GGD), Ile-305, 330–331 (TA), Met-383, and Gly-412.

The protein in the N-terminal section; belongs to the precorrin-2 dehydrogenase / sirohydrochlorin ferrochelatase family. It in the C-terminal section; belongs to the precorrin methyltransferase family.

The catalysed reaction is uroporphyrinogen III + 2 S-adenosyl-L-methionine = precorrin-2 + 2 S-adenosyl-L-homocysteine + H(+). The enzyme catalyses precorrin-2 + NAD(+) = sirohydrochlorin + NADH + 2 H(+). It catalyses the reaction siroheme + 2 H(+) = sirohydrochlorin + Fe(2+). It functions in the pathway cofactor biosynthesis; adenosylcobalamin biosynthesis; precorrin-2 from uroporphyrinogen III: step 1/1. Its pathway is cofactor biosynthesis; adenosylcobalamin biosynthesis; sirohydrochlorin from precorrin-2: step 1/1. The protein operates within porphyrin-containing compound metabolism; siroheme biosynthesis; precorrin-2 from uroporphyrinogen III: step 1/1. It participates in porphyrin-containing compound metabolism; siroheme biosynthesis; siroheme from sirohydrochlorin: step 1/1. It functions in the pathway porphyrin-containing compound metabolism; siroheme biosynthesis; sirohydrochlorin from precorrin-2: step 1/1. Multifunctional enzyme that catalyzes the SAM-dependent methylations of uroporphyrinogen III at position C-2 and C-7 to form precorrin-2 via precorrin-1. Then it catalyzes the NAD-dependent ring dehydrogenation of precorrin-2 to yield sirohydrochlorin. Finally, it catalyzes the ferrochelation of sirohydrochlorin to yield siroheme. The protein is Siroheme synthase of Baumannia cicadellinicola subsp. Homalodisca coagulata.